A 473-amino-acid chain; its full sequence is Photosystem II CP43 reaction center protein (473 aa).

A propeptide spanning residues 1–14 (MKTLYSPRRFYPVE) is cleaved from the precursor. Thr-15 bears the N-acetylthreonine mark. Thr-15 carries the phosphothreonine modification. Helical transmembrane passes span 69–93 (LFEV…PHLA), 134–155 (LLGP…KDRN), 178–200 (KALY…RKIS), 255–275 (KPFA…LSYS), and 291–312 (WFNN…ASQA). Glu-367 serves as a coordination point for [CaMn4O5] cluster. Residues 447 to 471 (RARAAAAGFEKGIDRDLEPVLFMTP) form a helical membrane-spanning segment.

This sequence belongs to the PsbB/PsbC family. PsbC subfamily. As to quaternary structure, PSII is composed of 1 copy each of membrane proteins PsbA, PsbB, PsbC, PsbD, PsbE, PsbF, PsbH, PsbI, PsbJ, PsbK, PsbL, PsbM, PsbT, PsbX, PsbY, PsbZ, Psb30/Ycf12, at least 3 peripheral proteins of the oxygen-evolving complex and a large number of cofactors. It forms dimeric complexes. The cofactor is Binds multiple chlorophylls and provides some of the ligands for the Ca-4Mn-5O cluster of the oxygen-evolving complex. It may also provide a ligand for a Cl- that is required for oxygen evolution. PSII binds additional chlorophylls, carotenoids and specific lipids..

The protein resides in the plastid. Its subcellular location is the chloroplast thylakoid membrane. Functionally, one of the components of the core complex of photosystem II (PSII). It binds chlorophyll and helps catalyze the primary light-induced photochemical processes of PSII. PSII is a light-driven water:plastoquinone oxidoreductase, using light energy to abstract electrons from H(2)O, generating O(2) and a proton gradient subsequently used for ATP formation. This Ranunculus macranthus (Large buttercup) protein is Photosystem II CP43 reaction center protein.